The primary structure comprises 293 residues: Formamidopyrimidine-DNA glycosylase (293 aa).

Pro-2 acts as the Schiff-base intermediate with DNA in catalysis. The Proton donor role is filled by Glu-3. Lys-58 functions as the Proton donor; for beta-elimination activity in the catalytic mechanism. His-104, Arg-123, and Lys-166 together coordinate DNA. Residues Ala-257–Lys-293 form an FPG-type zinc finger. The active-site Proton donor; for delta-elimination activity is Arg-283.

It belongs to the FPG family. As to quaternary structure, monomer. Zn(2+) serves as cofactor.

The enzyme catalyses Hydrolysis of DNA containing ring-opened 7-methylguanine residues, releasing 2,6-diamino-4-hydroxy-5-(N-methyl)formamidopyrimidine.. It carries out the reaction 2'-deoxyribonucleotide-(2'-deoxyribose 5'-phosphate)-2'-deoxyribonucleotide-DNA = a 3'-end 2'-deoxyribonucleotide-(2,3-dehydro-2,3-deoxyribose 5'-phosphate)-DNA + a 5'-end 5'-phospho-2'-deoxyribonucleoside-DNA + H(+). Involved in base excision repair of DNA damaged by oxidation or by mutagenic agents. Acts as a DNA glycosylase that recognizes and removes damaged bases. Has a preference for oxidized purines, such as 7,8-dihydro-8-oxoguanine (8-oxoG). Has AP (apurinic/apyrimidinic) lyase activity and introduces nicks in the DNA strand. Cleaves the DNA backbone by beta-delta elimination to generate a single-strand break at the site of the removed base with both 3'- and 5'-phosphates. This Rhodopseudomonas palustris (strain BisB5) protein is Formamidopyrimidine-DNA glycosylase.